Reading from the N-terminus, the 118-residue chain is UPF0344 protein BLi01172/BL01343 (118 aa).

Helical transmembrane passes span 6 to 26 (ITSW…YSSG), 33 to 53 (ITHM…AQLF), 62 to 82 (EYIA…MLLI), and 89 to 109 (AATG…VLGL).

The protein belongs to the UPF0344 family.

It is found in the cell membrane. This chain is UPF0344 protein BLi01172/BL01343, found in Bacillus licheniformis (strain ATCC 14580 / DSM 13 / JCM 2505 / CCUG 7422 / NBRC 12200 / NCIMB 9375 / NCTC 10341 / NRRL NRS-1264 / Gibson 46).